Consider the following 440-residue polypeptide: Probable secretory pathway GDP dissociation inhibitor 1 (440 aa).

This sequence belongs to the Rab GDI family.

This Schizosaccharomyces pombe (strain 972 / ATCC 24843) (Fission yeast) protein is Probable secretory pathway GDP dissociation inhibitor 1 (gdi1).